The chain runs to 523 residues: MAIEQIIEEVLPYLTKWYTILFGAAVTYFLSIALRNKFYEYKLKCENPVYFEDAGLFGIPALIDIIKVRKAGQLADYTDTTFDKYPNLSSYMTVAGVLKIVFTVDPENIKAVLATQFNDFALGARHAHFDPLLGDGIFTLDGEGWKLSRAMLRPQFAREQIAHVKALEPHVQILAKQIKLNKGKTFDLQELFFRFTVDTATEFLFGESVHSLYDEKLGIPAPNDIPGRENFAEAFNTSQHYLATRTYSQIFYWLTNPKEFRDCNAKVHKLAQYFVNTALNATEKEVEEKSKGGYVFLYELVKQTRDPKVLQDQLLNIMVAGRDTTAGLLSFAMFELARNPKIWNKLREEVEVNFGLGDEARVDEISFETLKKCEYLKAVLNETLRMYPSVPINFRTATRDTTLPRGGGKDGNSPIFVPKGSSVVYSVYKTHRLKQFYGEDAYEFRPERWFEPSTRKLGWAYLPFNGGPRICLGQQFALTEASYVIARLAQMFEHLESKDETYPPNKCIHLTMNHNEGVFISAK.

Residues 17 to 34 (WYTILFGAAVTYFLSIAL) traverse the membrane as a helical segment. Residue Cys471 participates in heme binding.

It belongs to the cytochrome P450 family. Heme serves as cofactor.

Its subcellular location is the membrane. In terms of biological role, together with an NADPH cytochrome P450 the enzyme system catalyzes the terminal hydroxylation as the first step in the assimilation of alkanes and fatty acids. The chain is Cytochrome P450 52A3-A (CYP52A3-A) from Candida maltosa (Yeast).